Consider the following 264-residue polypeptide: MTETSGTFNDIEARLAAVLEEAFEAGTSIYNERGFKRRIGYGNRPAVIHIDLANAWTQPGHPFSCPGMETIIPNVQRINEAARAKGVPVFYTTNVYRNRDASSGTNDMGLWYSKIPTETLPADSYWAQIDDRIAPADGEVVIEKNRASAFPGTNLELFLTSNRIDTLIVTGATAAGCVRHTVEDAIAKGFRPIIPRETIGDRVPGVVQWNLYDIDNKFGDVESTDSVVQYLDALPQFEDTVPKTLSDPQPEVEAPADPVFAEQH.

The active-site Nucleophile is the Cys-177. Residues 240 to 264 (TVPKTLSDPQPEVEAPADPVFAEQH) form a disordered region.

Homotetramer. It depends on sulfate as a cofactor.

It carries out the reaction N-carbamoylsarcosine + H2O + 2 H(+) = sarcosine + NH4(+) + CO2. It functions in the pathway amine and polyamine degradation; creatinine degradation; sarcosine from creatinine: step 3/3. In Arthrobacter sp, this protein is N-carbamoylsarcosine amidase.